A 1674-amino-acid polypeptide reads, in one-letter code: Kinesin-like protein KIF14 (1674 aa).

The tract at residues 1 to 391 (MSVHTSHSRH…TEPDSLKVEN (391 aa)) is required for PRC1-binding. Disordered regions lie at residues 132-158 (ETLN…KGVN) and 171-374 (KDSN…PEEN). 2 stretches are compositionally biased toward polar residues: residues 142–151 (GSDSASQASR) and 202–214 (SRAP…QTEA). The residue at position 257 (Ser-257) is a Phosphoserine. Residue Thr-262 is modified to Phosphothreonine. Basic and acidic residues predominate over residues 267 to 279 (VLEHRWTPRHDPP). The span at 302–311 (TFRSASSESR) shows a compositional bias: polar residues. Residues 317-329 (VPEHRWTPRHDLP) show a composition bias toward basic and acidic residues. Positions 391-772 (NSQVTVAVRV…AAQRSNRNID (382 aa)) are required for microtubule-binding with high affinity. The Kinesin motor domain maps to 393-736 (QVTVAVRVRP…LRYATQARLI (344 aa)). ATP is bound at residue 482–489 (GQTGSGKS). A coiled-coil region spans residues 743–826 (NEDMNAKLIR…QETKELQKAG (84 aa)). One can recognise an FHA domain in the interval 860-911 (TTVGKHTPSSSHDIQLSGVLIADDHCTIRNFGGTVSIVPAGEAKTYVNGTHI). The required for CIT-binding stretch occupies residues 936 to 1674 (PVEVQKGKKL…DCTPNRIQWV (739 aa)). A coiled-coil region spans residues 961 to 1110 (EFAKNELLTA…VQMLQENRGN (150 aa)). Phosphoserine occurs at positions 973 and 1326. The interval 1618-1674 (GLSKPWESCSSNSKEEQCKSDRADCGKSGPRRACEPHGDATPAVSSGDCTPNRIQWV) is disordered. The span at 1630-1642 (SKEEQCKSDRADC) shows a compositional bias: basic and acidic residues. Residues 1660–1674 (AVSSGDCTPNRIQWV) show a composition bias toward polar residues.

It belongs to the TRAFAC class myosin-kinesin ATPase superfamily. Kinesin family. Directly interacts with PRC1 within a complex also containing KIF4A, KIF20A and KIF23; targets to the central spindle. Directly interacts with CIT depending on the activation state of the kinase (stronger interaction with the kinase-dead form); targets to the midbody. Interacts with ARRB2; the interaction is detected in the nucleus upon OR1D2 stimulation. Interacts with AKT1; the interaction is detected in the plasma membrane upon INS stimulation and promotes AKT1 phosphorylation. Interacts with SVIL; at midbody during cytokinesis. Interacts with RADIL (via PDZ domain); recruits RADIL to the microtubule network restricting RADIL from interaction with activated RAP1A.

The protein localises to the nucleus. The protein resides in the cytoplasm. It is found in the cytoskeleton. Its subcellular location is the spindle. It localises to the midbody. Microtubule motor protein that binds to microtubules with high affinity through each tubulin heterodimer and has an ATPase activity. Plays a role in many processes like cell division, cytokinesis and also in cell proliferation and apoptosis. During cytokinesis, targets to central spindle and midbody through its interaction with PRC1 and CIT respectively. Regulates cell growth through regulation of cell cycle progression and cytokinesis. During cell cycle progression acts through SCF-dependent proteasomal ubiquitin-dependent protein catabolic process which controls CDKN1B degradation, resulting in positive regulation of cyclins, including CCNE1, CCND1 and CCNB1. During late neurogenesis, regulates the cerebellar and cerebral cortex development and olfactory bulb development through regulation of apoptosis, cell proliferation and cell division. Also is required for chromosome congression and alignment during mitotic cell cycle process. Regulates cell spreading, focal adhesion dynamics, and cell migration through its interaction with RADIL resulting in regulation of RAP1A-mediated inside-out integrin activation by tethering RADIL on microtubules. In Mus musculus (Mouse), this protein is Kinesin-like protein KIF14.